A 599-amino-acid chain; its full sequence is Glycerophosphodiester phosphodiesterase domain-containing protein 5 (599 aa).

Residues 1 to 42 (MVKHQPLQYYEPQLCLSCLTGIYGCRWKRYQRSHDDTTKWER) are Cytoplasmic-facing. 2 cysteine pairs are disulfide-bonded: C15–C18 and C25–C576. A helical transmembrane segment spans residues 43 to 63 (LWFLILTSSFFLTLVWFYFWW). Over 64 to 87 (EVHNDYNEINWFLYNRMGYWSDWS) the chain is Extracellular. Residues 88–108 (IPILVTTAAGFTYITVLLILA) traverse the membrane as a helical segment. Over 109 to 125 (LCHIAVGQQMNLHWLHK) the chain is Cytoplasmic. Residues 126–146 (IGLMTTLITTVVTMSSIAQLW) form a helical membrane-spanning segment. At 147 to 160 (DDEWEMVFISLQAT) the chain is on the extracellular side. The helical transmembrane segment at 161 to 181 (APFLHIGALAAVTALSWLIAG) threads the bilayer. Over 182–192 (QFARMEKATSQ) the chain is Cytoplasmic. A helical transmembrane segment spans residues 193-213 (MLMVTAYLAVVVALYLVPLTI). Residues 214-497 (SSPCIMEKKA…IWLMPPDEYR (284 aa)) are Extracellular-facing. In terms of domain architecture, GP-PDE spans 228-485 (PAIIGHRGAP…DSSHVLRKVP (258 aa)). N301, N336, N352, N374, and N448 each carry an N-linked (GlcNAc...) asparagine glycan. The helical transmembrane segment at 498 to 518 (LIWITSDLISFIIIVGVFIFQ) threads the bilayer. Residues 519-599 (NYHNDQWRLG…DHRDTRLRMN (81 aa)) lie on the Cytoplasmic side of the membrane.

This sequence belongs to the glycerophosphoryl diester phosphodiesterase family. In terms of assembly, interacts with PRDX1; forms a mixed-disulfide with PRDX1, leading to disrupt intramolecular disulfide bond between Cys-25 and Cys-576. Post-translationally, intramolecular disulfide bond between Cys-25 and Cys-576 is reduced by PRDX1. Detected in mature motor neurons.

The protein localises to the endomembrane system. It localises to the cytoplasm. The protein resides in the perinuclear region. It is found in the cell projection. Its subcellular location is the growth cone. The enzyme catalyses a 1,2-diacyl-sn-glycero-3-phospho-(1D-myo-inositol-4,5-bisphosphate) + H2O = 1D-myo-inositol 1,4,5-trisphosphate + a 1,2-diacyl-sn-glycerol + H(+). It catalyses the reaction sn-glycerol 3-phosphocholine + H2O = sn-glycerol 3-phosphate + choline + H(+). With respect to regulation, activated by PRDX1 by reduction of an intramolecular disulfide bond. Glycerophosphodiester phosphodiesterase that promotes cell cycle exit and drives spinal motor neuron differentiation. Mediates the cleavage of glycosylphosphatidylinositol (GPI) anchor of target proteins: removes the GPI-anchor of RECK, leading to release RECK from the plasma membrane. May contribute to the osmotic regulation of cellular glycerophosphocholine. This Gallus gallus (Chicken) protein is Glycerophosphodiester phosphodiesterase domain-containing protein 5 (GDPD5).